The following is a 359-amino-acid chain: Fc receptor-like A (359 aa).

The N-terminal stretch at 1-27 (MKLGCVLMAWALYLSLGVLWVAQMLLA) is a signal peptide. Ig-like C2-type domains follow at residues 70 to 159 (PFHL…ETAS) and 170 to 257 (PAPI…PQLE). 2 cysteine pairs are disulfide-bonded: C99-C143 and C192-C240. Positions 259–313 (RVQGASSSAAPPTLNPAPQKSAAPGTAPEEAPGPLPPPPTPSSEDPGFSSPLGMP) are disordered. Low complexity predominate over residues 279–288 (SAAPGTAPEE). The span at 289–299 (APGPLPPPPTP) shows a compositional bias: pro residues.

In terms of assembly, monomer or homodimer; disulfide-linked. In terms of tissue distribution, expressed specifically in primary and secondary lymphoid tissues like lymph node, spleen and tonsil. Specifically expressed in B-cells with a high level in normal germinal center B-cells, centroblasts and in a subset of diffuse large B-cell lymphomas. Highly expressed in bone marrow B-cells and weakly in earlier B lineage cells. Expressed in pre-germinal and germinal center B-cells in secondary lymphoid tissues. Also expressed in melanoma and melanocytes.

Its subcellular location is the cytoplasm. Functionally, may be implicated in B-cell differentiation and lymphomagenesis. The polypeptide is Fc receptor-like A (FCRLA) (Homo sapiens (Human)).